The sequence spans 263 residues: Type III pantothenate kinase (263 aa).

Residue 9–16 (DIGNTSIK) coordinates ATP. Substrate-binding positions include Tyr-103 and 110–113 (GADR). Asp-112 functions as the Proton acceptor in the catalytic mechanism. Residue Asp-134 participates in K(+) binding. Thr-137 lines the ATP pocket. Thr-190 contributes to the substrate binding site.

This sequence belongs to the type III pantothenate kinase family. As to quaternary structure, homodimer. Requires NH4(+) as cofactor. It depends on K(+) as a cofactor.

The protein resides in the cytoplasm. It catalyses the reaction (R)-pantothenate + ATP = (R)-4'-phosphopantothenate + ADP + H(+). Its pathway is cofactor biosynthesis; coenzyme A biosynthesis; CoA from (R)-pantothenate: step 1/5. Its function is as follows. Catalyzes the phosphorylation of pantothenate (Pan), the first step in CoA biosynthesis. The chain is Type III pantothenate kinase from Desulfovibrio desulfuricans (strain ATCC 27774 / DSM 6949 / MB).